The chain runs to 207 residues: Uracil phosphoribosyltransferase (207 aa).

5-phospho-alpha-D-ribose 1-diphosphate contacts are provided by residues Arg77, Arg102, and 129–137; that span reads DPMLATGGS. Residues Ile192 and 197–199 each bind uracil; that span reads GDA. 5-phospho-alpha-D-ribose 1-diphosphate is bound at residue Asp198.

Belongs to the UPRTase family. Requires Mg(2+) as cofactor.

The enzyme catalyses UMP + diphosphate = 5-phospho-alpha-D-ribose 1-diphosphate + uracil. It participates in pyrimidine metabolism; UMP biosynthesis via salvage pathway; UMP from uracil: step 1/1. With respect to regulation, allosterically activated by GTP. In terms of biological role, catalyzes the conversion of uracil and 5-phospho-alpha-D-ribose 1-diphosphate (PRPP) to UMP and diphosphate. The chain is Uracil phosphoribosyltransferase from Dictyoglomus turgidum (strain DSM 6724 / Z-1310).